Consider the following 140-residue polypeptide: Nucleoside diphosphate kinase (140 aa).

Residues lysine 11, phenylalanine 59, arginine 87, threonine 93, arginine 104, and asparagine 114 each contribute to the ATP site. Residue histidine 117 is the Pros-phosphohistidine intermediate of the active site.

The protein belongs to the NDK family. Homotetramer. Mg(2+) is required as a cofactor.

The protein resides in the cytoplasm. The catalysed reaction is a 2'-deoxyribonucleoside 5'-diphosphate + ATP = a 2'-deoxyribonucleoside 5'-triphosphate + ADP. It catalyses the reaction a ribonucleoside 5'-diphosphate + ATP = a ribonucleoside 5'-triphosphate + ADP. Functionally, major role in the synthesis of nucleoside triphosphates other than ATP. The ATP gamma phosphate is transferred to the NDP beta phosphate via a ping-pong mechanism, using a phosphorylated active-site intermediate. The sequence is that of Nucleoside diphosphate kinase from Rhizobium johnstonii (strain DSM 114642 / LMG 32736 / 3841) (Rhizobium leguminosarum bv. viciae).